Reading from the N-terminus, the 252-residue chain is Mitochondrial peculiar membrane protein 1 (252 aa).

Residues 230-252 (TTTTSKGSSPQVKHKVVSVDEDN) form a disordered region.

The protein localises to the mitochondrion membrane. This is Mitochondrial peculiar membrane protein 1 (MPM1) from Saccharomyces cerevisiae (strain ATCC 204508 / S288c) (Baker's yeast).